We begin with the raw amino-acid sequence, 113 residues long: MSEEKIVNTEAAPEAVAERPARAERSERPERPAKGPFGKKRFESRRKVCKLCAEKIENVDYKNFQFIKSFTMDSGKILSRRITGTCAKHQRQIASAVKRDRNLAILPYSLPKK.

The interval 1–41 (MSEEKIVNTEAAPEAVAERPARAERSERPERPAKGPFGKKR) is disordered. Positions 16–33 (VAERPARAERSERPERPA) are enriched in basic and acidic residues.

It belongs to the bacterial ribosomal protein bS18 family. Part of the 30S ribosomal subunit. Forms a tight heterodimer with protein bS6.

Its function is as follows. Binds as a heterodimer with protein bS6 to the central domain of the 16S rRNA, where it helps stabilize the platform of the 30S subunit. The protein is Small ribosomal subunit protein bS18 of Elusimicrobium minutum (strain Pei191).